A 229-amino-acid chain; its full sequence is DNA mismatch repair protein MutH (229 aa).

This sequence belongs to the MutH family.

The protein localises to the cytoplasm. In terms of biological role, sequence-specific endonuclease that cleaves unmethylated GATC sequences. It is involved in DNA mismatch repair. This is DNA mismatch repair protein MutH from Escherichia coli O45:K1 (strain S88 / ExPEC).